Consider the following 89-residue polypeptide: U-scoloptoxin(12)-Er1a (89 aa).

Residues 1 to 22 (MKGLFLVVFLMWFVSQMNTEET) form the signal peptide.

The protein belongs to the scoloptoxin-12 family. In terms of processing, contains 3 disulfide bonds. Expressed by the venom gland.

It is found in the secreted. The polypeptide is U-scoloptoxin(12)-Er1a (Ethmostigmus rubripes (Giant centipede)).